We begin with the raw amino-acid sequence, 96 residues long: Protein Vpr (96 aa).

Residues 1-42 (MEQAPEDQGPQREPYNEWTLELLEELKSEAVRHFPRLWLHSL) form a homooligomerization region. 3 positions are modified to phosphoserine; by host: serine 79, serine 94, and serine 96.

It belongs to the HIV-1 VPR protein family. As to quaternary structure, homooligomer, may form homodimer. Interacts with p6-gag region of the Pr55 Gag precursor protein through a (Leu-X-X)4 motif near the C-terminus of the P6gag protein. Interacts with host UNG. May interact with host RAD23A/HHR23A. Interacts with host VPRBP/DCAF1, leading to hijack the CUL4A-RBX1-DDB1-DCAF1/VPRBP complex, mediating ubiquitination of host proteins such as TERT and ZGPAT and arrest of the cell cycle in G2 phase. Post-translationally, phosphorylated on several residues by host. These phosphorylations regulate VPR activity for the nuclear import of the HIV-1 pre-integration complex.

It localises to the virion. The protein localises to the host nucleus. It is found in the host extracellular space. During virus replication, may deplete host UNG protein, and incude G2-M cell cycle arrest. Acts by targeting specific host proteins for degradation by the 26S proteasome, through association with the cellular CUL4A-DDB1 E3 ligase complex by direct interaction with host VPRPB/DCAF-1. Cell cycle arrest reportedly occurs within hours of infection and is not blocked by antiviral agents, suggesting that it is initiated by the VPR carried into the virion. Additionally, VPR induces apoptosis in a cell cycle dependent manner suggesting that these two effects are mechanistically linked. Detected in the serum and cerebrospinal fluid of AIDS patient, VPR may also induce cell death to bystander cells. Its function is as follows. During virus entry, plays a role in the transport of the viral pre-integration (PIC) complex to the host nucleus. This function is crucial for viral infection of non-dividing macrophages. May act directly at the nuclear pore complex, by binding nucleoporins phenylalanine-glycine (FG)-repeat regions. The chain is Protein Vpr from Human immunodeficiency virus type 1 group M subtype B (isolate RF/HAT3) (HIV-1).